Here is a 29-residue protein sequence, read N- to C-terminus: Trypsin inhibitor 5 (29 aa).

3 disulfide bridges follow: cysteine 3–cysteine 20, cysteine 10–cysteine 22, and cysteine 16–cysteine 28.

Belongs to the protease inhibitor I7 (squash-type serine protease inhibitor) family.

The protein localises to the secreted. Its function is as follows. Strongly inhibits trypsin, weakly inhibits chymotrypsin. The protein is Trypsin inhibitor 5 of Cyclanthera pedata (Achocha).